Here is a 193-residue protein sequence, read N- to C-terminus: dTTP/UTP pyrophosphatase (193 aa).

The active-site Proton acceptor is aspartate 77.

It belongs to the Maf family. YhdE subfamily. The cofactor is a divalent metal cation.

Its subcellular location is the cytoplasm. The catalysed reaction is dTTP + H2O = dTMP + diphosphate + H(+). It catalyses the reaction UTP + H2O = UMP + diphosphate + H(+). Functionally, nucleoside triphosphate pyrophosphatase that hydrolyzes dTTP and UTP. May have a dual role in cell division arrest and in preventing the incorporation of modified nucleotides into cellular nucleic acids. The polypeptide is dTTP/UTP pyrophosphatase (Bacteroides fragilis (strain YCH46)).